Here is a 363-residue protein sequence, read N- to C-terminus: tRNA U34 carboxymethyltransferase (363 aa).

Carboxy-S-adenosyl-L-methionine contacts are provided by residues K101, W134, K139, G159, 181–183 (DPS), 221–222 (LE), M237, Y241, and R356.

This sequence belongs to the class I-like SAM-binding methyltransferase superfamily. CmoB family. Homotetramer.

It catalyses the reaction carboxy-S-adenosyl-L-methionine + 5-hydroxyuridine(34) in tRNA = 5-carboxymethoxyuridine(34) in tRNA + S-adenosyl-L-homocysteine + H(+). Catalyzes carboxymethyl transfer from carboxy-S-adenosyl-L-methionine (Cx-SAM) to 5-hydroxyuridine (ho5U) to form 5-carboxymethoxyuridine (cmo5U) at position 34 in tRNAs. This Psychrobacter cryohalolentis (strain ATCC BAA-1226 / DSM 17306 / VKM B-2378 / K5) protein is tRNA U34 carboxymethyltransferase.